The chain runs to 1159 residues: Cation channel sperm-associated auxiliary subunit gamma (1159 aa).

A signal peptide spans 1–35; sequence MCGPAMFPAGPRWPRVRVLQVLWALLAVLLASRRL. At 36–1065 the chain is on the extracellular side; that stretch reads WAIKDFEECT…IHGLPLSPKR (1030 aa). 2 disulfide bridges follow: C44-C105 and C159-C165. N-linked (GlcNAc...) asparagine glycosylation is present at N102. N177 carries N-linked (GlcNAc...) asparagine glycosylation. C288 and C343 are oxidised to a cystine. The N-linked (GlcNAc...) asparagine glycan is linked to N355. C394 and C402 form a disulfide bridge. Residues N426 and N574 are each glycosylated (N-linked (GlcNAc...) asparagine). Cystine bridges form between C638–C860, C806–C834, C882–C1046, C909–C918, and C1010–C1016. Residues 1066-1087 traverse the membrane as a helical segment; sequence ALFILMVSLSVFVGLVIFYIAF. At 1088 to 1159 the chain is on the cytoplasmic side; sequence CLLWPLVVKG…KEAVERQLMT (72 aa). Positions 1138-1159 are disordered; sequence FSSRMTEDKAEPKEAVERQLMT. Residues 1142–1159 are compositionally biased toward basic and acidic residues; sequence MTEDKAEPKEAVERQLMT.

The protein belongs to the CATSPERG family. In terms of assembly, component of the CatSper complex or CatSpermasome composed of the core pore-forming members CATSPER1, CATSPER2, CATSPER3 and CATSPER4 as well as auxiliary members CATSPERB, CATSPERG, CATSPERD, CATSPERE, CATSPERZ, SCLO6C1, TMEM249, TMEM262 and EFCAB9. HSPA1 may be an additional auxiliary complex member. The core complex members CATSPER1, CATSPER2, CATSPER3 and CATSPER4 form a heterotetrameric channel. The auxiliary CATSPERB, CATSPERG, CATSPERD and CATSPERE subunits form a pavilion-like structure over the pore which stabilizes the complex through interactions with CATSPER4, CATSPER3, CATSPER1 and CATSPER2 respectively. TMEM262/CATSPERH interacts with CATSPERB, further stabilizing the complex. C2CD6/CATSPERT interacts at least with CATSPERD and is required for targeting the CatSper complex in the flagellar membrane.

It localises to the cell projection. The protein localises to the cilium. It is found in the flagellum membrane. Auxiliary component of the CatSper complex, a complex involved in sperm cell hyperactivation. Sperm cell hyperactivation is needed for sperm motility which is essential late in the preparation of sperm for fertilization. In Macaca fascicularis (Crab-eating macaque), this protein is Cation channel sperm-associated auxiliary subunit gamma.